Reading from the N-terminus, the 326-residue chain is N-acetyl-gamma-glutamyl-phosphate reductase (326 aa).

Cysteine 155 is an active-site residue.

The protein belongs to the NAGSA dehydrogenase family. Type 1 subfamily.

It localises to the cytoplasm. It carries out the reaction N-acetyl-L-glutamate 5-semialdehyde + phosphate + NADP(+) = N-acetyl-L-glutamyl 5-phosphate + NADPH + H(+). The protein operates within amino-acid biosynthesis; L-arginine biosynthesis; N(2)-acetyl-L-ornithine from L-glutamate: step 3/4. Catalyzes the NADPH-dependent reduction of N-acetyl-5-glutamyl phosphate to yield N-acetyl-L-glutamate 5-semialdehyde. The polypeptide is N-acetyl-gamma-glutamyl-phosphate reductase (Shewanella woodyi (strain ATCC 51908 / MS32)).